We begin with the raw amino-acid sequence, 344 residues long: Phenylalanine--tRNA ligase alpha subunit (344 aa).

E256 lines the Mg(2+) pocket.

It belongs to the class-II aminoacyl-tRNA synthetase family. Phe-tRNA synthetase alpha subunit type 1 subfamily. In terms of assembly, tetramer of two alpha and two beta subunits. Mg(2+) serves as cofactor.

Its subcellular location is the cytoplasm. It catalyses the reaction tRNA(Phe) + L-phenylalanine + ATP = L-phenylalanyl-tRNA(Phe) + AMP + diphosphate + H(+). The sequence is that of Phenylalanine--tRNA ligase alpha subunit from Geobacillus kaustophilus (strain HTA426).